A 623-amino-acid chain; its full sequence is Heterogeneous nuclear ribonucleoprotein L (623 aa).

Positions 1–16 are enriched in basic residues; that stretch reads MSRRLLPRAEKRRRRL. The segment at 1–97 is disordered; that stretch reads MSRRLLPRAE…NYDDPHKTPA (97 aa). Basic and acidic residues predominate over residues 17-27; that stretch reads EQRQQPDEQLR. Over residues 28 to 37 the composition is skewed to low complexity; that stretch reads RAGAMVKMAA. Residues 38–54 are compositionally biased toward gly residues; that stretch reads AGGGGGGGRYYGGGNEG. Residues lysine 59 and lysine 62 each participate in a glycyl lysine isopeptide (Lys-Gly) (interchain with G-Cter in SUMO2) cross-link. Residues 69–87 are compositionally biased toward gly residues; it reads QHGGGGGGGSGAAGGGGGE. At serine 98 the chain carries Phosphoserine. Residues 99–173 form the RRM 1 domain; the sequence is PVVHIRGLID…HPAFVNYSTS (75 aa). Residue lysine 133 forms a Glycyl lysine isopeptide (Lys-Gly) (interchain with G-Cter in SUMO2) linkage. Serine 182 is modified (phosphoserine). Residues 190-267 form the RRM 2 domain; the sequence is SVLLFTILNP…CTLKIEYAKP (78 aa). Lysine 266 bears the N6-acetyllysine mark. Residues 281 to 298 show a composition bias toward polar residues; it reads DYTNPNLSGQGDPGSNPN. A disordered region spans residues 281–413; the sequence is DYTNPNLSGQ…PPPPDYGPHA (133 aa). Residues serine 288 and serine 295 each carry the phosphoserine modification. Lysine 299 participates in a covalent cross-link: Glycyl lysine isopeptide (Lys-Gly) (interchain with G-Cter in SUMO2). Residues arginine 388 and arginine 392 each carry the asymmetric dimethylarginine modification. The segment covering 398-409 has biased composition (pro residues); the sequence is GHPPPPPPPPDY. Position 415 is a phosphoserine (serine 415). RRM domains follow at residues 416-490 and 498-586; these read PVLM…VSKQ and SYGL…WDSK. The residue at position 578 (serine 578) is a Phosphoserine; by CaMK4. Lysine 602 is covalently cross-linked (Glycyl lysine isopeptide (Lys-Gly) (interchain with G-Cter in SUMO2)).

Identified in a IGF2BP1-dependent mRNP granule complex containing untranslated mRNAs. Interacts with HNRNPLL. Interacts with APEX1; the interaction is DNA-dependent. Component of a complex with SETD2. Interacts with ELAVL1. Part of a transcription inhibitory ribonucleoprotein complex composed at least of the circular RNA circZNF827, ZNF827 and HNRNPK. Interacts with CHD8 in an RNA-dependent manner. Post-translationally, several isoelectric forms of the L protein are probably the results of post-translational modifications. Phosphorylation at Ser-578 by CaMK4 enhances interaction with a CaMK4-responsive RNA element (CaRRE1), and prevents inclusion of the stress axis-regulated exon (STREX) of the KCNMA1 potassium channel transcripts upon membrane depolarization.

It localises to the nucleus. The protein resides in the nucleoplasm. It is found in the cytoplasm. Splicing factor binding to exonic or intronic sites and acting as either an activator or repressor of exon inclusion. Exhibits a binding preference for CA-rich elements. Component of the heterogeneous nuclear ribonucleoprotein (hnRNP) complexes and associated with most nascent transcripts. Associates, together with APEX1, to the negative calcium responsive element (nCaRE) B2 of the APEX2 promoter. As part of a ribonucleoprotein complex composed at least of ZNF827, HNRNPK and the circular RNA circZNF827 that nucleates the complex on chromatin, may negatively regulate the transcription of genes involved in neuronal differentiation. Regulates alternative splicing of a core group of genes involved in neuronal differentiation, likely by mediating H3K36me3-coupled transcription elongation and co-transcriptional RNA processing via interaction with CHD8. This Rattus norvegicus (Rat) protein is Heterogeneous nuclear ribonucleoprotein L.